Reading from the N-terminus, the 725-residue chain is Golgin candidate 4 (725 aa).

Residues 17 to 62 (HDVHDDDEDDDEDLTIYGSTNGGTDRRNSNGFRYSRSPMANGFESP) are disordered. A compositionally biased stretch (acidic residues) spans 21 to 30 (DDDEDDDEDL). A coiled-coil region spans residues 66-132 (EIERYKAEIN…LKESRLDLSR (67 aa)). Disordered stretches follow at residues 134–183 (SNNN…SHKK), 191–210 (LEER…EKER), and 311–349 (ASQK…KEDM). The segment covering 148–175 (NRSQRSPTNWKNRNQMNNGIASKPNGTE) has biased composition (polar residues). Coiled coils occupy residues 191 to 316 (LEER…QKST), 344 to 407 (PGKE…QTNE), and 437 to 563 (EIRK…LNRM). Over residues 324 to 349 (STEDLSRHLSSLDEEKAGTFPGKEDM) the composition is skewed to basic and acidic residues. Positions 562–613 (RMSMDSDFLVDRRIVIKLLVTYFQRNHSREVLDLMVRMLGFSEEEKQRIGLA) constitute a GRIP domain. A compositionally biased stretch (basic and acidic residues) spans 672–688 (ERERREAEDAANKEQEK). The tract at residues 672 to 725 (ERERREAEDAANKEQEKATVSSTQRPKYEQSDSEFSTVPLTSSNSNHRLSRLLT) is disordered. Residues 711–725 (LTSSNSNHRLSRLLT) show a composition bias toward low complexity.

The protein resides in the golgi apparatus. In terms of biological role, golgi matrix protein playing a role in tethering of vesicles to Golgi membranes and in maintaining the overall structure of the Golgi apparatus. In Arabidopsis thaliana (Mouse-ear cress), this protein is Golgin candidate 4 (GC4).